The following is a 588-amino-acid chain: Proline--tRNA ligase (588 aa).

Belongs to the class-II aminoacyl-tRNA synthetase family. ProS type 1 subfamily. In terms of assembly, homodimer.

It is found in the cytoplasm. It catalyses the reaction tRNA(Pro) + L-proline + ATP = L-prolyl-tRNA(Pro) + AMP + diphosphate. In terms of biological role, catalyzes the attachment of proline to tRNA(Pro) in a two-step reaction: proline is first activated by ATP to form Pro-AMP and then transferred to the acceptor end of tRNA(Pro). As ProRS can inadvertently accommodate and process non-cognate amino acids such as alanine and cysteine, to avoid such errors it has two additional distinct editing activities against alanine. One activity is designated as 'pretransfer' editing and involves the tRNA(Pro)-independent hydrolysis of activated Ala-AMP. The other activity is designated 'posttransfer' editing and involves deacylation of mischarged Ala-tRNA(Pro). The misacylated Cys-tRNA(Pro) is not edited by ProRS. This chain is Proline--tRNA ligase, found in Helicobacter hepaticus (strain ATCC 51449 / 3B1).